A 149-amino-acid polypeptide reads, in one-letter code: Urease accessory protein UreE (149 aa).

It belongs to the UreE family.

Its subcellular location is the cytoplasm. Its function is as follows. Involved in urease metallocenter assembly. Binds nickel. Probably functions as a nickel donor during metallocenter assembly. The polypeptide is Urease accessory protein UreE (Ruegeria pomeroyi (strain ATCC 700808 / DSM 15171 / DSS-3) (Silicibacter pomeroyi)).